The chain runs to 89 residues: Cell division topological specificity factor (89 aa).

This sequence belongs to the MinE family.

Its function is as follows. Prevents the cell division inhibition by proteins MinC and MinD at internal division sites while permitting inhibition at polar sites. This ensures cell division at the proper site by restricting the formation of a division septum at the midpoint of the long axis of the cell. This chain is Cell division topological specificity factor, found in Legionella pneumophila (strain Paris).